A 234-amino-acid polypeptide reads, in one-letter code: Ubiquinone biosynthesis O-methyltransferase (234 aa).

The S-adenosyl-L-methionine site is built by R36, G56, D77, and M125.

This sequence belongs to the methyltransferase superfamily. UbiG/COQ3 family.

It catalyses the reaction a 3-demethylubiquinol + S-adenosyl-L-methionine = a ubiquinol + S-adenosyl-L-homocysteine + H(+). The catalysed reaction is a 3-(all-trans-polyprenyl)benzene-1,2-diol + S-adenosyl-L-methionine = a 2-methoxy-6-(all-trans-polyprenyl)phenol + S-adenosyl-L-homocysteine + H(+). It participates in cofactor biosynthesis; ubiquinone biosynthesis. Its function is as follows. O-methyltransferase that catalyzes the 2 O-methylation steps in the ubiquinone biosynthetic pathway. The sequence is that of Ubiquinone biosynthesis O-methyltransferase from Actinobacillus pleuropneumoniae serotype 5b (strain L20).